A 169-amino-acid chain; its full sequence is FAM231A/C-like protein LOC102723383 (169 aa).

Residues Leu82–His140 are disordered.

This sequence belongs to the FAM231 family.

In Homo sapiens (Human), this protein is FAM231A/C-like protein LOC102723383.